The sequence spans 1032 residues: Kinesin heavy chain isoform 5A (1032 aa).

The residue at position 2 (A2) is an N-acetylalanine. One can recognise a Kinesin motor domain in the interval 9–327 (SIKVLCRFRP…LMFGQRAKTI (319 aa)). 86–93 (GQTSSGKT) contacts ATP. The interval 174–315 (VSSPEEILDV…PSSYNDAETK (142 aa)) is microtubule-binding. The interval 271-361 (EGTKSYVPYR…KTKAQKETIA (91 aa)) is necessary for interaction with ZFYVE27. Residues 331–906 (ASVNLELTAE…VDRIKEAVRY (576 aa)) are a coiled coil. The interaction with BICD2 stretch occupies residues 353 to 1032 (TKAQKETIAK…FPLHQETAAS (680 aa)). Position 397 is a phosphothreonine (T397). Disordered stretches follow at residues 906–939 (YKSSGKRGHSAQIAKPVRPGHYPASSPTNPYGTR) and 978–1010 (SGATSSGGPLASYQKANMDNGNATDINDNRSDL). The interval 907 to 1032 (KSSGKRGHSA…FPLHQETAAS (126 aa)) is globular. Residues 978–989 (SGATSSGGPLAS) are compositionally biased toward low complexity. Over residues 991 to 1003 (QKANMDNGNATDI) the composition is skewed to polar residues.

Belongs to the TRAFAC class myosin-kinesin ATPase superfamily. Kinesin family. Kinesin subfamily. In terms of assembly, oligomer composed of two heavy chains and two light chains. Interacts with GRIP1. Interacts with FMR1 (via C-terminus); this interaction is increased in a mGluR-dependent manner. Interacts with ZFYVE27. Interacts with VAPA, VAPB, SURF4, RAB11A (GDP-bound form), RAB11B (GDP-bound form) and RTN3 in a ZFYVE27-dependent manner. Interacts with BORCS5. Interacts with BICD2. Interacts with DTNB. Distributed throughout the CNS but is highly enriched in subsets of neurons.

It is found in the cytoplasm. It localises to the perinuclear region. Its subcellular location is the cytoskeleton. The protein resides in the perikaryon. It carries out the reaction ATP + H2O + a kinesin associated with a microtubule at position (n) = ADP + phosphate a kinesin associated with a microtubule at position (n+1, toward the plus end).. In terms of biological role, microtubule-dependent motor required for slow axonal transport of neurofilament proteins (NFH, NFM and NFL). Can induce formation of neurite-like membrane protrusions in non-neuronal cells in a ZFYVE27-dependent manner. The ZFYVE27-KIF5A complex contributes to the vesicular transport of VAPA, VAPB, SURF4, RAB11A, RAB11B and RTN3 proteins in neurons. Required for anterograde axonal transportation of MAPK8IP3/JIP3 which is essential for MAPK8IP3/JIP3 function in axon elongation. The polypeptide is Kinesin heavy chain isoform 5A (Homo sapiens (Human)).